A 464-amino-acid chain; its full sequence is Chromosomal replication initiator protein DnaA (464 aa).

Residues methionine 1–histidine 74 form a domain I, interacts with DnaA modulators region. The interval histidine 74 to proline 117 is domain II. The tract at residues aspartate 118 to isoleucine 341 is domain III, AAA+ region. 4 residues coordinate ATP: glycine 162, glycine 164, lysine 165, and threonine 166. Residues glutamate 342–arginine 464 form a domain IV, binds dsDNA region.

The protein belongs to the DnaA family. Oligomerizes as a right-handed, spiral filament on DNA at oriC.

It is found in the cytoplasm. Its function is as follows. Plays an essential role in the initiation and regulation of chromosomal replication. ATP-DnaA binds to the origin of replication (oriC) to initiate formation of the DNA replication initiation complex once per cell cycle. Binds the DnaA box (a 9 base pair repeat at the origin) and separates the double-stranded (ds)DNA. Forms a right-handed helical filament on oriC DNA; dsDNA binds to the exterior of the filament while single-stranded (ss)DNA is stabiized in the filament's interior. The ATP-DnaA-oriC complex binds and stabilizes one strand of the AT-rich DNA unwinding element (DUE), permitting loading of DNA polymerase. After initiation quickly degrades to an ADP-DnaA complex that is not apt for DNA replication. Binds acidic phospholipids. The polypeptide is Chromosomal replication initiator protein DnaA (Treponema pallidum (strain Nichols)).